The chain runs to 361 residues: Peptide chain release factor 1 (361 aa).

Residue Q237 is modified to N5-methylglutamine. Basic and acidic residues predominate over residues K287–K297. Positions K287–E307 are disordered.

It belongs to the prokaryotic/mitochondrial release factor family. Post-translationally, methylated by PrmC. Methylation increases the termination efficiency of RF1.

The protein localises to the cytoplasm. Its function is as follows. Peptide chain release factor 1 directs the termination of translation in response to the peptide chain termination codons UAG and UAA. This chain is Peptide chain release factor 1, found in Francisella philomiragia subsp. philomiragia (strain ATCC 25017 / CCUG 19701 / FSC 153 / O#319-036).